Reading from the N-terminus, the 418-residue chain is MLPNTGKLAGCTVFITGASRGIGKAIALKAAKDGANIVIAAKTAQAHPKLPGTIYTAAEEIKAAGGKALPCIVDVRDEEQISSAVEKAVEKFGGIDILVNNASAISLTNTLETPTKKVDLMMNVNTRGTYLTSKACIPYLKKSKVAHILNLSPPLNLNPLWFKQHCAYTIAKYGMSMCVLGMAEEFKGEIAVNALWPRTAIHTAAMDMLGGSGVESQCRKVDIMADAAYCIFKKPKSFTGNFIIDENILKEEGIKNFDVYAITPGHPLLPDFFLDEQPAMVTKKADSYGAVPELKEEKTQPPPKARSGAVEETFRIVKDSLSDDIVKATQAVYQFELSGEDGGTWFLDLKSKGGNIGYGEPSDQADVVMSMSTDDFVKMFSGKLKPTMAFMSGKLKIKGNMALAIKLEKLMNQMNSKL.

NADP(+)-binding positions include 17–23 (GASRGIG), K42, and D74. K42 carries the post-translational modification N6-(2-hydroxyisobutyryl)lysine. K116 is subject to N6-acetyllysine. Y168 acts as the Proton acceptor in catalysis. Position 172 (K172) interacts with NADP(+). Residues 306-415 (RSGAVEETFR…KLEKLMNQMN (110 aa)) enclose the SCP2 domain. K318 is modified (N6-succinyllysine).

The protein belongs to the short-chain dehydrogenases/reductases (SDR) family.

The protein localises to the peroxisome. Its subcellular location is the mitochondrion. In terms of biological role, has apparently no steroid dehydrogenase activity. Controls bile acid (BA) and lipid metabolism in response to nutritional cues. This chain is Hydroxysteroid dehydrogenase-like protein 2 (HSDL2), found in Bos taurus (Bovine).